We begin with the raw amino-acid sequence, 489 residues long: Putative general negative regulator of transcription C16C9.04c (489 aa).

Residues 18–61 (CPLCMEEIDISDKNFKPCQCGYRVCRFCWHHIKEDLNGRCPACR) form an RING-type zinc finger. Residues 76–109 (AEEWKMDLHRKNERKKREKERKEVELSNRKHLAN) are a coiled coil. Positions 116 to 198 (NLAYVNGLSP…VSDGRHLRAS (83 aa)) constitute an RRM domain. Residues 199–226 (YGTTKYCTSYLRNQQCPNPSCMYLHEPG) form a C3H1-type zinc finger. Composition is skewed to polar residues over residues 246-261 (LSTKPNVVNGATHSPS) and 466-479 (ENQPPTSLGINNGN). 2 disordered regions span residues 246 to 268 (LSTKPNVVNGATHSPSPSLPFKT) and 458 to 489 (VPEQEKSAENQPPTSLGINNGNPVMPPPGFQS).

The protein resides in the nucleus. Functionally, may negatively regulate the basal and activated transcription of many genes. The sequence is that of Putative general negative regulator of transcription C16C9.04c from Schizosaccharomyces pombe (strain 972 / ATCC 24843) (Fission yeast).